The following is an 86-amino-acid chain: Mu-theraphotoxin-Cg2a 2 (86 aa).

Positions 1–21 (MKVSVVITLAVLGVMFVWASA) are cleaved as a signal peptide. Residues 22-50 (AELEERGSDQRDSPAWIKSMERIFQSEER) constitute a propeptide that is removed on maturation. 3 disulfides stabilise this stretch: C52–C66, C59–C71, and C65–C78. F84 carries the post-translational modification Phenylalanine amide.

This sequence belongs to the neurotoxin 10 (Hwtx-1) family. 37 (Jztx-31) subfamily. Expressed by the venom gland.

Its subcellular location is the secreted. Inhibits both peak current and fast inactivation of voltage-gated sodium channels (Nav) channels. Inhibits the inactivation of Nav on DRG neurons (EC(50)=1.77 uM) and peak current of cardiac myocytes (IC(50)=0.90 uM). This is Mu-theraphotoxin-Cg2a 2 from Chilobrachys guangxiensis (Chinese earth tiger tarantula).